The sequence spans 301 residues: Bifunctional protein FolD (301 aa).

Residues 169–171, Ser194, and Ile235 each bind NADP(+); that span reads GRS.

Belongs to the tetrahydrofolate dehydrogenase/cyclohydrolase family. As to quaternary structure, homodimer.

It catalyses the reaction (6R)-5,10-methylene-5,6,7,8-tetrahydrofolate + NADP(+) = (6R)-5,10-methenyltetrahydrofolate + NADPH. The catalysed reaction is (6R)-5,10-methenyltetrahydrofolate + H2O = (6R)-10-formyltetrahydrofolate + H(+). The protein operates within one-carbon metabolism; tetrahydrofolate interconversion. Catalyzes the oxidation of 5,10-methylenetetrahydrofolate to 5,10-methenyltetrahydrofolate and then the hydrolysis of 5,10-methenyltetrahydrofolate to 10-formyltetrahydrofolate. The protein is Bifunctional protein FolD of Gloeothece citriformis (strain PCC 7424) (Cyanothece sp. (strain PCC 7424)).